Here is a 194-residue protein sequence, read N- to C-terminus: Putative manganese efflux pump MntP (194 aa).

A run of 6 helical transmembrane segments spans residues 3-23 (PITI…AAIG), 37-57 (LYVA…GWLL), 65-85 (IATF…IHMI), 112-132 (LAAT…SLAF), 139-159 (IVAA…VMLG), and 170-190 (AEIV…YEHL).

It belongs to the MntP (TC 9.B.29) family.

Its subcellular location is the cell inner membrane. Functionally, probably functions as a manganese efflux pump. The sequence is that of Putative manganese efflux pump MntP from Xylella fastidiosa (strain 9a5c).